The sequence spans 419 residues: Serine/threonine-protein kinase Kist (419 aa).

Positions 23–304 constitute a Protein kinase domain; sequence WQVQSRLGSG…AEMALCSPFF (282 aa). ATP contacts are provided by residues 29 to 37 and Lys54; that span reads LGSGSSASV. Residues Asp141 and Asp158 each act as proton acceptor in the active site. In terms of domain architecture, RRM spans 324 to 406; it reads RLLNVLDDDY…KFVVATFYPL (83 aa).

It belongs to the protein kinase superfamily. Ser/Thr protein kinase family. In terms of assembly, interacts with stathmin and CDKN1B/p27Kip1 Interacts with PAM. In terms of tissue distribution, in the embryo, preferentially expressed in the developing nervous system.

The protein localises to the cytoplasm. It localises to the nucleus. It catalyses the reaction L-seryl-[protein] + ATP = O-phospho-L-seryl-[protein] + ADP + H(+). The enzyme catalyses L-threonyl-[protein] + ATP = O-phospho-L-threonyl-[protein] + ADP + H(+). Functionally, upon serum stimulation, phosphorylates CDKN1B/p27Kip1, thus controlling CDKN1B subcellular location and cell cycle progression in G1 phase. May be involved in trafficking and/or processing of RNA. This Rattus norvegicus (Rat) protein is Serine/threonine-protein kinase Kist (Uhmk1).